A 269-amino-acid polypeptide reads, in one-letter code: 4-hydroxy-tetrahydrodipicolinate reductase (269 aa).

NAD(+) contacts are provided by residues 9 to 14 and E35; that span reads GAGGRM. R36 lines the NADP(+) pocket. Residues 98–100 and 122–125 contribute to the NAD(+) site; these read GTT and ASNY. H155 functions as the Proton donor/acceptor in the catalytic mechanism. Residue H156 coordinates (S)-2,3,4,5-tetrahydrodipicolinate. K159 (proton donor) is an active-site residue. 165–166 is a (S)-2,3,4,5-tetrahydrodipicolinate binding site; it reads GT.

It belongs to the DapB family.

The protein resides in the cytoplasm. It catalyses the reaction (S)-2,3,4,5-tetrahydrodipicolinate + NAD(+) + H2O = (2S,4S)-4-hydroxy-2,3,4,5-tetrahydrodipicolinate + NADH + H(+). The catalysed reaction is (S)-2,3,4,5-tetrahydrodipicolinate + NADP(+) + H2O = (2S,4S)-4-hydroxy-2,3,4,5-tetrahydrodipicolinate + NADPH + H(+). It functions in the pathway amino-acid biosynthesis; L-lysine biosynthesis via DAP pathway; (S)-tetrahydrodipicolinate from L-aspartate: step 4/4. Functionally, catalyzes the conversion of 4-hydroxy-tetrahydrodipicolinate (HTPA) to tetrahydrodipicolinate. The chain is 4-hydroxy-tetrahydrodipicolinate reductase from Actinobacillus pleuropneumoniae serotype 3 (strain JL03).